The sequence spans 198 residues: MNGAQVIIQEINREAEQKIKYILDEARKEAEKIKEEARKRGESRAEWILRKAKTQAELEKQRIIATARLEVRRKKLSLQEEYISRVLKEVTSRLSNLSEDEYLETVLALLKEALKELDVKEIRVHSNEKTLALISSRIEEIRRELGDVSIEIGSPIQTIGGVIVETKDGNMRVDNTFEARMARLESELRSKIAEILFG.

The protein belongs to the V-ATPase E subunit family. As to quaternary structure, has multiple subunits with at least A(3), B(3), C, D, E, F, H, I and proteolipid K(x).

Its subcellular location is the cell membrane. Its function is as follows. Component of the A-type ATP synthase that produces ATP from ADP in the presence of a proton gradient across the membrane. In Pyrococcus furiosus (strain ATCC 43587 / DSM 3638 / JCM 8422 / Vc1), this protein is A-type ATP synthase subunit E.